A 1013-amino-acid polypeptide reads, in one-letter code: Chitin synthase A (1013 aa).

The N-linked (GlcNAc...) asparagine glycan is linked to asparagine 10. Disordered stretches follow at residues 26–83 and 95–218; these read RYSY…AADW and ERAD…RRGV. The span at 64 to 81 shows a compositional bias: low complexity; it reads TASRPASPARPWSPTRAA. The span at 154–173 shows a compositional bias: polar residues; it reads TISSRHGPQGSVQSFTSEST. Residues asparagine 194 and asparagine 316 are each glycosylated (N-linked (GlcNAc...) asparagine). A run of 5 helical transmembrane segments spans residues 646 to 666, 686 to 706, 721 to 741, 759 to 779, and 792 to 811; these read LLQL…FFFI, IFIV…IFSM, MIVY…LIVL, LFVN…FTSF, and AQYF…YAFC. Asparagine 837 is a glycosylation site (N-linked (GlcNAc...) asparagine). Helical transmembrane passes span 892-912 and 919-939; these read VSVW…VYGV and VYLA…AIGS. N-linked (GlcNAc...) asparagine glycosylation is found at asparagine 967, asparagine 980, asparagine 989, and asparagine 995.

The protein belongs to the chitin synthase family. Class II subfamily. Mainly expressed in the metulae, phialides, and conidia.

It localises to the cell membrane. It is found in the cell septum. It catalyses the reaction [(1-&gt;4)-N-acetyl-beta-D-glucosaminyl](n) + UDP-N-acetyl-alpha-D-glucosamine = [(1-&gt;4)-N-acetyl-beta-D-glucosaminyl](n+1) + UDP + H(+). Functionally, polymerizes chitin, a structural polymer of the cell wall and septum, by transferring the sugar moiety of UDP-GlcNAc to the non-reducing end of the growing chitin polymer. Seems not to be involved in hyphal growth, but, with chsC, chsA shares critical functions in hyphal wall integrity and differentiation. ChsA and chsC share also overlapping roles in septum formation. Invoved in the production of the asexual spores (conidia) that are formed by differentiated aerial hyphae called conidiophores. The chain is Chitin synthase A from Emericella nidulans (strain FGSC A4 / ATCC 38163 / CBS 112.46 / NRRL 194 / M139) (Aspergillus nidulans).